Consider the following 375-residue polypeptide: 23S rRNA (uracil(747)-C(5))-methyltransferase RlmC (375 aa).

[4Fe-4S] cluster is bound by residues Cys-3, Cys-11, Cys-14, and Cys-87. Gln-212, Phe-241, Glu-262, and Asn-307 together coordinate S-adenosyl-L-methionine. The active-site Nucleophile is Cys-334.

It belongs to the class I-like SAM-binding methyltransferase superfamily. RNA M5U methyltransferase family. RlmC subfamily.

It carries out the reaction uridine(747) in 23S rRNA + S-adenosyl-L-methionine = 5-methyluridine(747) in 23S rRNA + S-adenosyl-L-homocysteine + H(+). Catalyzes the formation of 5-methyl-uridine at position 747 (m5U747) in 23S rRNA. This chain is 23S rRNA (uracil(747)-C(5))-methyltransferase RlmC, found in Escherichia coli O139:H28 (strain E24377A / ETEC).